A 341-amino-acid chain; its full sequence is MFEKNFPIISVQKVNKEIGNHRILNDISFSVFPGEIFGIIGHSGSGKSTLLRCLDFLVSPTSGSISVAGFHNLHSDKTNSRLAFAKRVAYISQSCGLFSAKTVFENIVYPLKLHYPDMTKSLIEEKVDNALDFLNLYERKHAYPSRLSGGQKQKVAIAIAIVSDPVVLLCDEITSALDPRSTEDVTDKLLKLNEERGITQVFVSHEIEVVKKLCCQTLVMHQGAIEELGPTEKLFLNPRSSITEELFHMNSIAKGIYNHGENEEILRLGFSQGLAVQGMISKLIQDGQISINILSGDINLFRKVPLGFLIIALSGDKEEREKAKDILIKKGVIIQQLQKTK.

Positions 9 to 247 constitute an ABC transporter domain; sequence ISVQKVNKEI…PRSSITEELF (239 aa). Residue 41–48 participates in ATP binding; it reads GHSGSGKS.

This sequence belongs to the ABC transporter superfamily. Methionine importer (TC 3.A.1.24) family. The complex is composed of two ATP-binding proteins (MetN), two transmembrane proteins (MetI) and a solute-binding protein (MetQ).

It is found in the cell inner membrane. The enzyme catalyses L-methionine(out) + ATP + H2O = L-methionine(in) + ADP + phosphate + H(+). It catalyses the reaction D-methionine(out) + ATP + H2O = D-methionine(in) + ADP + phosphate + H(+). Its function is as follows. Part of the ABC transporter complex MetNIQ involved in methionine import. Responsible for energy coupling to the transport system. In Chlamydia caviae (strain ATCC VR-813 / DSM 19441 / 03DC25 / GPIC) (Chlamydophila caviae), this protein is Methionine import ATP-binding protein MetN.